The chain runs to 202 residues: Glycerol-3-phosphate acyltransferase (202 aa).

The next 6 membrane-spanning stretches (helical) occupy residues 2–22 (MIIV…GFVI), 54–74 (FLVT…PLWL), 85–105 (FFTN…YPVY), 120–140 (VVLG…FIIL), 141–161 (KIFK…VIGS), and 162–182 (LIIQ…ILII).

It belongs to the PlsY family. In terms of assembly, probably interacts with PlsX.

The protein resides in the cell membrane. It carries out the reaction an acyl phosphate + sn-glycerol 3-phosphate = a 1-acyl-sn-glycero-3-phosphate + phosphate. The protein operates within lipid metabolism; phospholipid metabolism. Its function is as follows. Catalyzes the transfer of an acyl group from acyl-phosphate (acyl-PO(4)) to glycerol-3-phosphate (G3P) to form lysophosphatidic acid (LPA). This enzyme utilizes acyl-phosphate as fatty acyl donor, but not acyl-CoA or acyl-ACP. The protein is Glycerol-3-phosphate acyltransferase of Staphylococcus aureus (strain bovine RF122 / ET3-1).